Consider the following 592-residue polypeptide: MGEQLGGLKRTHMCGELGVKDVGKSVVVMGWVNSRRDHGGLVFIDLRDRTGIVQIVFSEQVSKEVFEKVQSVRSEYVLAVEGEVVKRLPENVNPKIPTGEIEIYAKNLKILSKSETPPFPIEDRSNVSEAVRLKYRYLDLRRPSMQRNLITRFKLTQAVREFLNDNGFIEIETPMLIKSTPEGARDYLVPSRIYPGKFYALPQSPQIFKQLLMIAGFDRYYQIARCLRDEDLRADRQPEFTQIDIEMSFVEVEDVLDINERMIKHVFKKVLDVDLDIPFRRLTYQEAMERFGTDKPDLRFGMELKDLSDILRESEFNVFKNALKNGGSIRGINVKGAASMTRKQLDELVEFAKNFGAKGLLWMQVLEGEVKSPATKFLTEGELNKILERLEAEVGDLLLIVADKDEVVFDTLGHLRVEMAKRFNLIDESKYEFVWVVDFPLLEYDEEEKRYVAKHHPFTSPKDEDIDLLEKEPLKVRAKAYDIVLNGTEIGGGSIRIHDTELQKRMFKVLGFSEEEAWKKFGFLMEAFKYGAPPHGGIAYGLDRLAMIMTGSDTIRDVIAFPKTQNAVCLMSDAPSEVSEKQLKELHIKIDL.

An L-aspartate-binding site is contributed by Glu182. Residues 206 to 209 (QIFK) form an aspartate region. Residue Arg228 participates in L-aspartate binding. Residues 228-230 (RDE) and Gln237 contribute to the ATP site. His455 lines the L-aspartate pocket. Residue Glu489 participates in ATP binding. Arg496 contributes to the L-aspartate binding site. 541–544 (GLDR) serves as a coordination point for ATP.

Belongs to the class-II aminoacyl-tRNA synthetase family. Type 1 subfamily. As to quaternary structure, homodimer.

It localises to the cytoplasm. It carries out the reaction tRNA(Asx) + L-aspartate + ATP = L-aspartyl-tRNA(Asx) + AMP + diphosphate. In terms of biological role, aspartyl-tRNA synthetase with relaxed tRNA specificity since it is able to aspartylate not only its cognate tRNA(Asp) but also tRNA(Asn). Reaction proceeds in two steps: L-aspartate is first activated by ATP to form Asp-AMP and then transferred to the acceptor end of tRNA(Asp/Asn). This Caldanaerobacter subterraneus subsp. tengcongensis (strain DSM 15242 / JCM 11007 / NBRC 100824 / MB4) (Thermoanaerobacter tengcongensis) protein is Aspartate--tRNA(Asp/Asn) ligase.